Consider the following 339-residue polypeptide: Fructose-1,6-bisphosphatase class 1 (339 aa).

Residues E94, D116, L118, and D119 each coordinate Mg(2+). Residues 119–122 (DGSS), N210, and K276 contribute to the substrate site. E282 provides a ligand contact to Mg(2+).

Belongs to the FBPase class 1 family. Homotetramer. It depends on Mg(2+) as a cofactor.

The protein localises to the cytoplasm. The catalysed reaction is beta-D-fructose 1,6-bisphosphate + H2O = beta-D-fructose 6-phosphate + phosphate. It participates in carbohydrate biosynthesis; gluconeogenesis. The chain is Fructose-1,6-bisphosphatase class 1 from Burkholderia ambifaria (strain MC40-6).